Here is a 983-residue protein sequence, read N- to C-terminus: Pro-apoptotic serine protease NMA111 (983 aa).

The segment at 1–40 (MSVPTKRRLSFDESTNKRFLNGTHSTENNTSNIEVDEDYG) is disordered. The segment covering 22–33 (GTHSTENNTSNI) has biased composition (polar residues). The serine protease stretch occupies residues 59–260 (WQETITKVVN…LPIYRPLRAL (202 aa)). Catalysis depends on charge relay system residues His-108, Asp-139, and Ser-222. 2 PDZ domains span residues 287 to 365 (RRLG…QRGG) and 867 to 948 (FWSG…MSFD).

Belongs to the peptidase S1C family.

It localises to the nucleus. Functionally, nuclear serine protease which mediates apoptosis. This is Pro-apoptotic serine protease NMA111 (NMA111) from Scheffersomyces stipitis (strain ATCC 58785 / CBS 6054 / NBRC 10063 / NRRL Y-11545) (Yeast).